We begin with the raw amino-acid sequence, 205 residues long: Glycerol-3-phosphate acyltransferase (205 aa).

The next 5 membrane-spanning stretches (helical) occupy residues 13–33, 68–88, 90–110, 120–140, and 147–167; these read LLAL…GLIL, LLLD…LWGY, ASLV…WLGF, IGVL…IWLA, and YSSL…WVLG.

The protein belongs to the PlsY family. Probably interacts with PlsX.

The protein resides in the cell inner membrane. The enzyme catalyses an acyl phosphate + sn-glycerol 3-phosphate = a 1-acyl-sn-glycero-3-phosphate + phosphate. The protein operates within lipid metabolism; phospholipid metabolism. Its function is as follows. Catalyzes the transfer of an acyl group from acyl-phosphate (acyl-PO(4)) to glycerol-3-phosphate (G3P) to form lysophosphatidic acid (LPA). This enzyme utilizes acyl-phosphate as fatty acyl donor, but not acyl-CoA or acyl-ACP. This Agrobacterium fabrum (strain C58 / ATCC 33970) (Agrobacterium tumefaciens (strain C58)) protein is Glycerol-3-phosphate acyltransferase.